A 491-amino-acid polypeptide reads, in one-letter code: Probable cytosol aminopeptidase (491 aa).

Mn(2+) is bound by residues Lys261 and Asp266. Lys273 is an active-site residue. Mn(2+) is bound by residues Asp285, Asp344, and Glu346. Residue Arg348 is part of the active site.

Belongs to the peptidase M17 family. It depends on Mn(2+) as a cofactor.

It is found in the cytoplasm. It catalyses the reaction Release of an N-terminal amino acid, Xaa-|-Yaa-, in which Xaa is preferably Leu, but may be other amino acids including Pro although not Arg or Lys, and Yaa may be Pro. Amino acid amides and methyl esters are also readily hydrolyzed, but rates on arylamides are exceedingly low.. It carries out the reaction Release of an N-terminal amino acid, preferentially leucine, but not glutamic or aspartic acids.. Its function is as follows. Presumably involved in the processing and regular turnover of intracellular proteins. Catalyzes the removal of unsubstituted N-terminal amino acids from various peptides. The polypeptide is Probable cytosol aminopeptidase (Picosynechococcus sp. (strain ATCC 27264 / PCC 7002 / PR-6) (Agmenellum quadruplicatum)).